The sequence spans 163 residues: Globin CTT-Z (163 aa).

Residues 1–16 (MKFFAVLALCIVGAIA) form the signal peptide. Residues 18–162 (PLTSDEAALV…VYTAVFQIVT (145 aa)) enclose the Globin domain. Heme b contacts are provided by His-76 and His-111.

Belongs to the globin family.

The protein is Globin CTT-Z (CTT-Z) of Chironomus thummi piger (Midge).